A 283-amino-acid polypeptide reads, in one-letter code: Nicotine 6-hydroxylase medium subunit (283 aa).

In terms of domain architecture, FAD-binding PCMH-type spans 1–176 (MKLPAIRYAS…TDVWIPSRPN (176 aa)). FAD-binding positions include 31-35 (AGGQS) and 110-114 (TLGGS).

As to quaternary structure, heterotrimer composed of a large subunit (NdhL), a medium subunit (NdhM) and a small subunit (NdhS). FAD serves as cofactor.

It is found in the cytoplasm. It carries out the reaction (R)-nicotine + A + H2O = (R)-6-hydroxynicotine + AH2. The catalysed reaction is (S)-nicotine + A + H2O = (S)-6-hydroxynicotine + AH2. The protein operates within alkaloid degradation; nicotine degradation; 6-hydroxypseudooxynicotine from nicotine (R-isomer route): step 1/2. It participates in alkaloid degradation; nicotine degradation; 6-hydroxypseudooxynicotine from nicotine (S-isomer route): step 1/2. Nicotine dehydrogenase activity is inhibited by tungsten. Functionally, component of the nicotine 6-hydroxylase, which is involved in the degradation of nicotine. Catalyzes the hydroxylation of the pyridine ring at C6 to form 6-hydroxynicotine. Can use both L-nicotine and D-nicotine. In Paenarthrobacter nicotinovorans (Arthrobacter nicotinovorans), this protein is Nicotine 6-hydroxylase medium subunit.